Here is a 217-residue protein sequence, read N- to C-terminus: Large ribosomal subunit protein uL1 (217 aa).

The protein belongs to the universal ribosomal protein uL1 family.

In Eremothecium gossypii (strain ATCC 10895 / CBS 109.51 / FGSC 9923 / NRRL Y-1056) (Yeast), this protein is Large ribosomal subunit protein uL1 (RPL10A).